The chain runs to 499 residues: Glycerol kinase (499 aa).

Residue T11 participates in ADP binding. Residues T11, S12, and S13 each coordinate ATP. T11 lines the sn-glycerol 3-phosphate pocket. R15 is an ADP binding site. Positions 81, 82, 133, and 242 each coordinate sn-glycerol 3-phosphate. Glycerol contacts are provided by R81, E82, Y133, D242, and Q243. Residues T264 and G309 each contribute to the ADP site. Residues T264, G309, Q313, and G414 each contribute to the ATP site. ADP-binding residues include G414 and N418.

The protein belongs to the FGGY kinase family.

The catalysed reaction is glycerol + ATP = sn-glycerol 3-phosphate + ADP + H(+). Its pathway is polyol metabolism; glycerol degradation via glycerol kinase pathway; sn-glycerol 3-phosphate from glycerol: step 1/1. With respect to regulation, inhibited by fructose 1,6-bisphosphate (FBP). Its function is as follows. Key enzyme in the regulation of glycerol uptake and metabolism. Catalyzes the phosphorylation of glycerol to yield sn-glycerol 3-phosphate. The polypeptide is Glycerol kinase (Methylibium petroleiphilum (strain ATCC BAA-1232 / LMG 22953 / PM1)).